Reading from the N-terminus, the 118-residue chain is UPF0148 protein LS215_1455 (118 aa).

Belongs to the UPF0148 family.

The polypeptide is UPF0148 protein LS215_1455 (Saccharolobus islandicus (strain L.S.2.15 / Lassen #1) (Sulfolobus islandicus)).